Here is an 87-residue protein sequence, read N- to C-terminus: UPF0250 protein NT01EI_2946 (87 aa).

It belongs to the UPF0250 family.

This is UPF0250 protein NT01EI_2946 from Edwardsiella ictaluri (strain 93-146).